A 484-amino-acid chain; its full sequence is Glutamyl-tRNA(Gln) amidotransferase subunit A (484 aa).

Active-site charge relay system residues include Lys78 and Ser153. Ser177 acts as the Acyl-ester intermediate in catalysis.

The protein belongs to the amidase family. GatA subfamily. Heterotrimer of A, B and C subunits.

The catalysed reaction is L-glutamyl-tRNA(Gln) + L-glutamine + ATP + H2O = L-glutaminyl-tRNA(Gln) + L-glutamate + ADP + phosphate + H(+). Allows the formation of correctly charged Gln-tRNA(Gln) through the transamidation of misacylated Glu-tRNA(Gln) in organisms which lack glutaminyl-tRNA synthetase. The reaction takes place in the presence of glutamine and ATP through an activated gamma-phospho-Glu-tRNA(Gln). The protein is Glutamyl-tRNA(Gln) amidotransferase subunit A of Thermodesulfovibrio yellowstonii (strain ATCC 51303 / DSM 11347 / YP87).